A 232-amino-acid chain; its full sequence is Orotidine 5'-phosphate decarboxylase (232 aa).

Substrate-binding positions include Asp11, Lys33, 60–69 (DLKFHDIPNT), Thr120, Arg181, Gln190, Gly210, and Arg211. Lys62 acts as the Proton donor in catalysis.

This sequence belongs to the OMP decarboxylase family. Type 1 subfamily. Homodimer.

The enzyme catalyses orotidine 5'-phosphate + H(+) = UMP + CO2. It participates in pyrimidine metabolism; UMP biosynthesis via de novo pathway; UMP from orotate: step 2/2. Functionally, catalyzes the decarboxylation of orotidine 5'-monophosphate (OMP) to uridine 5'-monophosphate (UMP). This Vibrio vulnificus (strain YJ016) protein is Orotidine 5'-phosphate decarboxylase.